The chain runs to 414 residues: CinA-like protein (414 aa).

It belongs to the CinA family.

The protein is CinA-like protein of Geobacter sp. (strain M21).